The chain runs to 382 residues: MNSLQVLTKKVLIETKAFSKYHEDDIFILQQLGLWWEIGPIGFCKQCKMVTGGSMSCSDVDSYELDRALVKAVKENQTDLIKIFVSWGAEINFGIMCAKTKQTKDLCIQLGADPEFLDVGLYNMFVYLIKQKKVLLAIDIYYDNISILDSFDSHDFHVLIDFVYNRFILYLDEKEEEMTRNTLVLKFWYKFAIDFKLTKPIRYLSKKFPHLDIWRLQTAIYLGNIDEVHHAYFQEDIRLSLNVMMFLACARPGNKLGIYYCFALGADLDRALERLISFNSINRKISGETRLCIEGSYLSNVYFCIGLGANPYTKKIQETIKQKHSNIMILLFSKKKILSPHSVLQNKILDPSDVRKMISTYENTESFYPFFSLAVKLIQQAK.

Belongs to the asfivirus MGF 360 family.

Its function is as follows. Plays a role in virus cell tropism, and may be required for efficient virus replication in macrophages. The polypeptide is Protein MGF 360-4L (Ornithodoros (relapsing fever ticks)).